The sequence spans 357 residues: Phosphoribosylformylglycinamidine cyclo-ligase (357 aa).

It belongs to the AIR synthase family.

The protein resides in the cytoplasm. It catalyses the reaction 2-formamido-N(1)-(5-O-phospho-beta-D-ribosyl)acetamidine + ATP = 5-amino-1-(5-phospho-beta-D-ribosyl)imidazole + ADP + phosphate + H(+). Its pathway is purine metabolism; IMP biosynthesis via de novo pathway; 5-amino-1-(5-phospho-D-ribosyl)imidazole from N(2)-formyl-N(1)-(5-phospho-D-ribosyl)glycinamide: step 2/2. In Rhizobium etli (strain ATCC 51251 / DSM 11541 / JCM 21823 / NBRC 15573 / CFN 42), this protein is Phosphoribosylformylglycinamidine cyclo-ligase.